The primary structure comprises 97 residues: Integration host factor subunit alpha (97 aa).

The disordered stretch occupies residues Phe-50–Glu-71.

This sequence belongs to the bacterial histone-like protein family. As to quaternary structure, heterodimer of an alpha and a beta chain.

Functionally, this protein is one of the two subunits of integration host factor, a specific DNA-binding protein that functions in genetic recombination as well as in transcriptional and translational control. The protein is Integration host factor subunit alpha of Legionella pneumophila (strain Paris).